A 390-amino-acid chain; its full sequence is Transforming growth factor beta-1 proprotein (390 aa).

The first 29 residues, 1–29, serve as a signal peptide directing secretion; the sequence is MPPSGLRLLPLLLPLLWLLVLTPSRPAAG. The interval 30–74 is straightjacket domain; sequence LSTCKTIDMELVKRKRIETIRGQILSKLRLASPPSQGEVPPGPLP. Residues 75–271 are arm domain; that stretch reads EAVLALYNST…ATPLERAQHL (197 aa). N-linked (GlcNAc...) asparagine glycosylation is found at Asn82, Asn136, and Asn176. The interval 226-252 is bowtie tail; sequence DSKDNTLQVDINGFTTGRRGDLATIHG. The Cell attachment site signature appears at 244 to 246; sequence RGD. Disulfide bonds link Cys285-Cys294, Cys293-Cys356, Cys322-Cys387, and Cys326-Cys389.

It belongs to the TGF-beta family. Homodimer; disulfide-linked. Interacts with the serine proteases, HTRA1 and HTRA3: the interaction with either inhibits TGFB1-mediated signaling and the HTRA protease activity is required for this inhibition. May interact with THSD4; this interaction may lead to sequestration by FBN1 microfibril assembly and attenuation of TGFB signaling. Interacts with CD109, DPT and ASPN. Interacts with EFEMP2. Interacts with TSKU; the interaction contributes to regulation of the hair cycle. Interacts with TGFBR3. As to quaternary structure, homodimer; disulfide-linked. Interacts with transforming growth factor beta-1 (TGF-beta-1) chain; interaction is non-covalent and maintains TGF-beta-1 in a latent state; each latency-associated peptide (LAP) monomer interacts with TGF-beta-1 in the other monomer. Interacts with LTBP1; leading to regulation of TGF-beta-1 activation. Interacts with LRRC32/GARP; leading to regulation of TGF-beta-1 activation on the surface of activated regulatory T-cells (Tregs). Interacts with LRRC33/NRROS; leading to regulation of TGF-beta-1 activation in macrophages and microglia. Interacts (via cell attachment site) with integrins ITGAV and ITGB6 (ITGAV:ITGB6), leading to release of the active TGF-beta-1. Interacts with NREP; the interaction results in a decrease in TGFB1 autoinduction. Interacts with HSP90AB1; inhibits latent TGFB1 activation. In terms of assembly, homodimer; disulfide-linked. Interacts with TGF-beta receptors (TGFBR1 and TGFBR2), leading to signal transduction. In terms of processing, transforming growth factor beta-1 proprotein: The precursor proprotein is cleaved in the Golgi apparatus by FURIN to form Transforming growth factor beta-1 (TGF-beta-1) and Latency-associated peptide (LAP) chains, which remain non-covalently linked, rendering TGF-beta-1 inactive. Post-translationally, N-glycosylated. Deglycosylation leads to activation of Transforming growth factor beta-1 (TGF-beta-1); mechanisms triggering deglycosylation-driven activation of TGF-beta-1 are however unclear.

The protein localises to the secreted. It localises to the extracellular space. It is found in the extracellular matrix. Functionally, transforming growth factor beta-1 proprotein: Precursor of the Latency-associated peptide (LAP) and Transforming growth factor beta-1 (TGF-beta-1) chains, which constitute the regulatory and active subunit of TGF-beta-1, respectively. In terms of biological role, required to maintain the Transforming growth factor beta-1 (TGF-beta-1) chain in a latent state during storage in extracellular matrix. Associates non-covalently with TGF-beta-1 and regulates its activation via interaction with 'milieu molecules', such as LTBP1, LRRC32/GARP and LRRC33/NRROS, that control activation of TGF-beta-1. Interaction with LRRC33/NRROS regulates activation of TGF-beta-1 in macrophages and microglia. Interaction with LRRC32/GARP controls activation of TGF-beta-1 on the surface of activated regulatory T-cells (Tregs). Interaction with integrins (ITGAV:ITGB6 or ITGAV:ITGB8) results in distortion of the Latency-associated peptide chain and subsequent release of the active TGF-beta-1. Multifunctional protein that regulates the growth and differentiation of various cell types and is involved in various processes, such as normal development, immune function, microglia function and responses to neurodegeneration. Activation into mature form follows different steps: following cleavage of the proprotein in the Golgi apparatus, Latency-associated peptide (LAP) and Transforming growth factor beta-1 (TGF-beta-1) chains remain non-covalently linked rendering TGF-beta-1 inactive during storage in extracellular matrix. At the same time, LAP chain interacts with 'milieu molecules', such as LTBP1, LRRC32/GARP and LRRC33/NRROS that control activation of TGF-beta-1 and maintain it in a latent state during storage in extracellular milieus. TGF-beta-1 is released from LAP by integrins (ITGAV:ITGB6 or ITGAV:ITGB8): integrin-binding to LAP stabilizes an alternative conformation of the LAP bowtie tail and results in distortion of the LAP chain and subsequent release of the active TGF-beta-1. Once activated following release of LAP, TGF-beta-1 acts by binding to TGF-beta receptors (TGFBR1 and TGFBR2), which transduce signal. While expressed by many cells types, TGF-beta-1 only has a very localized range of action within cell environment thanks to fine regulation of its activation by Latency-associated peptide chain (LAP) and 'milieu molecules'. Plays an important role in bone remodeling: acts as a potent stimulator of osteoblastic bone formation, causing chemotaxis, proliferation and differentiation in committed osteoblasts. Can promote either T-helper 17 cells (Th17) or regulatory T-cells (Treg) lineage differentiation in a concentration-dependent manner. At high concentrations, leads to FOXP3-mediated suppression of RORC and down-regulation of IL-17 expression, favoring Treg cell development. At low concentrations in concert with IL-6 and IL-21, leads to expression of the IL-17 and IL-23 receptors, favoring differentiation to Th17 cells. Stimulates sustained production of collagen through the activation of CREB3L1 by regulated intramembrane proteolysis (RIP). Mediates SMAD2/3 activation by inducing its phosphorylation and subsequent translocation to the nucleus. Positively regulates odontoblastic differentiation in dental papilla cells, via promotion of IPO7-mediated translocation of phosphorylated SMAD2 to the nucleus and subsequent transcription of target genes. Can induce epithelial-to-mesenchymal transition (EMT) and cell migration in various cell types. The chain is Transforming growth factor beta-1 proprotein (TGFB1) from Chlorocebus aethiops (Green monkey).